Consider the following 253-residue polypeptide: Hydroxyacylglutathione hydrolase (253 aa).

Residues His-54, His-56, Asp-58, His-59, His-112, Asp-131, and His-169 each contribute to the Zn(2+) site.

It belongs to the metallo-beta-lactamase superfamily. Glyoxalase II family. Monomer. Zn(2+) is required as a cofactor.

It catalyses the reaction an S-(2-hydroxyacyl)glutathione + H2O = a 2-hydroxy carboxylate + glutathione + H(+). The protein operates within secondary metabolite metabolism; methylglyoxal degradation; (R)-lactate from methylglyoxal: step 2/2. In terms of biological role, thiolesterase that catalyzes the hydrolysis of S-D-lactoyl-glutathione to form glutathione and D-lactic acid. The polypeptide is Hydroxyacylglutathione hydrolase (Bartonella henselae (strain ATCC 49882 / DSM 28221 / CCUG 30454 / Houston 1) (Rochalimaea henselae)).